The following is a 152-amino-acid chain: SsrA-binding protein (152 aa).

Belongs to the SmpB family.

Its subcellular location is the cytoplasm. Functionally, required for rescue of stalled ribosomes mediated by trans-translation. Binds to transfer-messenger RNA (tmRNA), required for stable association of tmRNA with ribosomes. tmRNA and SmpB together mimic tRNA shape, replacing the anticodon stem-loop with SmpB. tmRNA is encoded by the ssrA gene; the 2 termini fold to resemble tRNA(Ala) and it encodes a 'tag peptide', a short internal open reading frame. During trans-translation Ala-aminoacylated tmRNA acts like a tRNA, entering the A-site of stalled ribosomes, displacing the stalled mRNA. The ribosome then switches to translate the ORF on the tmRNA; the nascent peptide is terminated with the 'tag peptide' encoded by the tmRNA and targeted for degradation. The ribosome is freed to recommence translation, which seems to be the essential function of trans-translation. The sequence is that of SsrA-binding protein from Persephonella marina (strain DSM 14350 / EX-H1).